The primary structure comprises 107 residues: U1-lycotoxin-Ls1n (107 aa).

The N-terminal stretch at M1–S20 is a signal peptide. A propeptide spanning residues E21–R41 is cleaved from the precursor. Intrachain disulfides connect C44-C59, C51-C68, C58-C86, and C70-C84.

It belongs to the neurotoxin 19 (CSTX) family. 04 (U1-Lctx) subfamily. In terms of tissue distribution, expressed by the venom gland.

Its subcellular location is the secreted. This is U1-lycotoxin-Ls1n from Lycosa singoriensis (Wolf spider).